The primary structure comprises 298 residues: Anamorsin homolog (298 aa).

Positions 1–143 (MTQLIITHQS…IKAEKPSWKP (143 aa)) are N-terminal SAM-like domain. Residues 143-162 (PEEGKVLVDDIDLEGSVPDI) form a linker region. [2Fe-2S] cluster-binding residues include Cys175, Cys182, Cys185, and Cys187. Residues 175–187 (CKSKERACNNCNC) form a fe-S binding site A region. [4Fe-4S] cluster is bound by residues Cys218, Cys221, Cys229, and Cys232. Short sequence motifs (cx2C motif) lie at residues 218-221 (CGNC) and 229-232 (CSGC). The fe-S binding site B stretch occupies residues 218 to 232 (CGNCYLGDAFRCSGC).

This sequence belongs to the anamorsin family. In terms of assembly, monomer. Requires [2Fe-2S] cluster as cofactor. [4Fe-4S] cluster serves as cofactor.

Its subcellular location is the cytoplasm. The protein localises to the mitochondrion intermembrane space. Functionally, component of the cytosolic iron-sulfur (Fe-S) protein assembly (CIA) machinery. Required for the maturation of extramitochondrial Fe-S proteins. Part of an electron transfer chain functioning in an early step of cytosolic Fe-S biogenesis, facilitating the de novo assembly of a [4Fe-4S] cluster on the cytosolic Fe-S scaffold complex. Electrons are transferred from NADPH via a FAD- and FMN-containing diflavin oxidoreductase. Together with the diflavin oxidoreductase, also required for the assembly of the diferric tyrosyl radical cofactor of ribonucleotide reductase (RNR), probably by providing electrons for reduction during radical cofactor maturation in the catalytic small subunit. In Cryptosporidium parvum (strain Iowa II), this protein is Anamorsin homolog.